The sequence spans 95 residues: Beta-defensin 132 (95 aa).

Positions 1–22 (MKFLLLVLAALGFLTQVIPASA) are cleaved as a signal peptide. 3 cysteine pairs are disulfide-bonded: C27–C55, C35–C49, and C39–C56. Residues 74–95 (HWQSRRRNTQRKDKKQQTTVTS) are disordered. Positions 76–87 (QSRRRNTQRKDK) are enriched in basic residues.

Belongs to the beta-defensin family.

The protein localises to the secreted. Has antibacterial activity. This chain is Beta-defensin 132 (DEFB132), found in Homo sapiens (Human).